The following is an 803-amino-acid chain: H(+)/Cl(-) exchange transporter 7 (803 aa).

Positions 1–46 (MANVSKKVSWSGRDRDDEEGAPLLRRTGQPDEETPLLNGAGPGARQ) are disordered. Residues 1–124 (MANVSKKVSW…TAFRTVEIKR (124 aa)) lie on the Cytoplasmic side of the membrane. Serine 9 carries the post-translational modification Phosphoserine. The next 2 helical transmembrane spans lie at 125-157 (WVIC…YRVI) and 172-195 (FSLL…VAFI). Positions 201-205 (GSGIP) match the Selectivity filter part_1 motif. Serine 202 provides a ligand contact to chloride. Residues 204–211 (IPQIKCFL) constitute an intramembrane region (helical). 2 consecutive transmembrane segments (helical) span residues 221-239 (RLKT…VVGG) and 245-262 (EGPM…ISQG). The Selectivity filter part_2 signature appears at 243 to 247 (GKEGP). 2 intramembrane regions (helical) span residues 286–298 (FVSA…VSAA) and 302–310 (PVGGVLFSL). 5 helical membrane-spanning segments follow: residues 320-339 (FLTW…LNFV), 373-403 (IPVF…FRIR), 408-430 (PCLQ…FVLI), 485-505 (PMTL…TYGL), and 510-533 (GVFI…LSYL). Positions 510-514 (GVFIP) match the Selectivity filter part_3 motif. Residue phenylalanine 512 participates in chloride binding. An intramembrane region (helical) is located at residues 543–557 (GKYALMGAAAQLGGI). The segment at residues 558–560 (VRM) is an intramembrane region (note=Loop between two helices). An intramembrane region (helical) is located at residues 561 to 572 (TLSLTVIMMEAT). Positions 573–576 (SNVT) form an intramembrane region, note=Loop between two helices. The helical transmembrane segment at 577–595 (YGFPIMLVLMTAKIVGDVF) threads the bilayer. Over 596-803 (IEGLYDMHIQ…GLEELSLAQT (208 aa)) the chain is Cytoplasmic. Tyrosine 600 contacts chloride. 2 CBS domains span residues 629–693 (MSTP…VFVE) and 739–797 (MNPS…GLEE). Residues 656–658 (HNG) and 781–784 (TRKD) contribute to the ATP site. Residue serine 799 is modified to Phosphoserine.

Belongs to the chloride channel (TC 2.A.49) family. ClC-7/CLCN7 subfamily. Chloride channel 7 are heteromers of alpha (CLCN7) and beta (OSTM1) subunits. In terms of tissue distribution, liver, spleen, kidneys and brain.

It localises to the lysosome membrane. The enzyme catalyses 2 chloride(in) + H(+)(out) = 2 chloride(out) + H(+)(in). In terms of biological role, slowly voltage-gated channel mediating the exchange of chloride ions against protons. Functions as antiporter and contributes to the acidification of the lysosome lumen and may be involved in maintaining lysosomal pH. The CLC channel family contains both chloride channels and proton-coupled anion transporters that exchange chloride or another anion for protons. The presence of conserved gating glutamate residues is typical for family members that function as antiporters. This is H(+)/Cl(-) exchange transporter 7 from Mus musculus (Mouse).